The chain runs to 183 residues: Efficient mitochondria targeting-associated protein 19 (183 aa).

Residues 1 to 25 are Cytoplasmic-facing; sequence MKVVSLRRIYSSEIYKLPTTRLHMD. The region spanning 24-156 is the EXPERA domain; that stretch reads MDTLYYYYFV…PYLAIPLWMA (133 aa). A helical membrane pass occupies residues 26–46; sequence TLYYYYFVSHLAAALFVDLPI. Topologically, residues 47–81 are lumenal; it reads TEWLGGSLSCLSGLRRFYLSTYEDPILLIPAPWKT. Residues 82–102 traverse the membrane as a helical segment; it reads ALFSSELFFQVPFFIWVSLRL. Over 103 to 110 the chain is Cytoplasmic; sequence RKKARDPV. The helical transmembrane segment at 111-131 threads the bilayer; that stretch reads LWVAILIYGVHAFTTTWCCMF. The Lumenal portion of the chain corresponds to 132 to 138; that stretch reads ELFAEKK. The helical transmembrane segment at 139–159 threads the bilayer; it reads WMIMSFYFPYLAIPLWMAIDM. Over 160–183 the chain is Cytoplasmic; the sequence is GGRLVKSCHAAKSGPSSTITSKSD.

This sequence belongs to the TMEM97/sigma-2 receptor family.

The protein localises to the endoplasmic reticulum membrane. Its function is as follows. Part of an import route for newly synthesized mitochondrial proteins termed the ER-SURF pathway (ER surface-mediated protein targeting), which retrieves mitochondrial precursor proteins from the ER surface and reroutes them to mitochondria for efficient mitochondrial import. Acts as a quality control factor in the ER, promoting the proteolytic degradation of nonproductive and extramitochondrial precursor proteins in the ER membrane thus removing them from the ER surface. This Schizosaccharomyces pombe (strain 972 / ATCC 24843) (Fission yeast) protein is Efficient mitochondria targeting-associated protein 19 (ema19).